A 63-amino-acid polypeptide reads, in one-letter code: Lysis protein (63 aa).

The helical transmembrane segment at 21-43 (LYVWIALAIVLSDFTSIFSHWIW) threads the bilayer.

Belongs to the Leviviricetes lysis protein family.

It is found in the host cell inner membrane. It localises to the host cell outer membrane. Functionally, induces the formation of specific membrane adhesion sites between the inner and outer membranes, apparently leading to host cell lysis. Lysis may be performed via activation of host murein hydrolases. The chain is Lysis protein from Escherichia coli (Bacteriophage JP34).